An 89-amino-acid polypeptide reads, in one-letter code: Small ribosomal subunit protein bS16c (89 aa).

It belongs to the bacterial ribosomal protein bS16 family.

It is found in the plastid. It localises to the chloroplast. This is Small ribosomal subunit protein bS16c from Morus indica (Mulberry).